A 461-amino-acid chain; its full sequence is Bifunctional protein GlmU (461 aa).

Positions 1–230 are pyrophosphorylase; the sequence is MECLMAVILA…SSEILGINDR (230 aa). UDP-N-acetyl-alpha-D-glucosamine contacts are provided by residues 9–12, Lys-23, Gln-73, 78–79, 101–103, Gly-140, Glu-155, Asn-170, and Asn-228; these read LAAG, GT, and YGD. Asp-103 provides a ligand contact to Mg(2+). Residue Asn-228 participates in Mg(2+) binding. Positions 231-251 are linker; sequence VQLAEAGRIIRSRILKRHMKN. The interval 252-461 is N-acetyltransferase; that stretch reads GVTIIDPDST…KKGMLRQEKE (210 aa). Residues Arg-333 and Lys-351 each coordinate UDP-N-acetyl-alpha-D-glucosamine. His-363 functions as the Proton acceptor in the catalytic mechanism. UDP-N-acetyl-alpha-D-glucosamine is bound by residues Tyr-366 and Asn-377. Acetyl-CoA-binding positions include 386–387, Ala-423, and Arg-440; that span reads NY.

In the N-terminal section; belongs to the N-acetylglucosamine-1-phosphate uridyltransferase family. It in the C-terminal section; belongs to the transferase hexapeptide repeat family. In terms of assembly, homotrimer. Mg(2+) is required as a cofactor.

Its subcellular location is the cytoplasm. The catalysed reaction is alpha-D-glucosamine 1-phosphate + acetyl-CoA = N-acetyl-alpha-D-glucosamine 1-phosphate + CoA + H(+). The enzyme catalyses N-acetyl-alpha-D-glucosamine 1-phosphate + UTP + H(+) = UDP-N-acetyl-alpha-D-glucosamine + diphosphate. It participates in nucleotide-sugar biosynthesis; UDP-N-acetyl-alpha-D-glucosamine biosynthesis; N-acetyl-alpha-D-glucosamine 1-phosphate from alpha-D-glucosamine 6-phosphate (route II): step 2/2. Its pathway is nucleotide-sugar biosynthesis; UDP-N-acetyl-alpha-D-glucosamine biosynthesis; UDP-N-acetyl-alpha-D-glucosamine from N-acetyl-alpha-D-glucosamine 1-phosphate: step 1/1. The protein operates within bacterial outer membrane biogenesis; LPS lipid A biosynthesis. Catalyzes the last two sequential reactions in the de novo biosynthetic pathway for UDP-N-acetylglucosamine (UDP-GlcNAc). The C-terminal domain catalyzes the transfer of acetyl group from acetyl coenzyme A to glucosamine-1-phosphate (GlcN-1-P) to produce N-acetylglucosamine-1-phosphate (GlcNAc-1-P), which is converted into UDP-GlcNAc by the transfer of uridine 5-monophosphate (from uridine 5-triphosphate), a reaction catalyzed by the N-terminal domain. The sequence is that of Bifunctional protein GlmU from Acetivibrio thermocellus (strain ATCC 27405 / DSM 1237 / JCM 9322 / NBRC 103400 / NCIMB 10682 / NRRL B-4536 / VPI 7372) (Clostridium thermocellum).